Here is a 70-residue protein sequence, read N- to C-terminus: DNA-directed RNA polymerase subunit omega (70 aa).

It belongs to the RNA polymerase subunit omega family. In terms of assembly, the RNAP catalytic core consists of 2 alpha, 1 beta, 1 beta' and 1 omega subunit. When a sigma factor is associated with the core the holoenzyme is formed, which can initiate transcription.

The enzyme catalyses RNA(n) + a ribonucleoside 5'-triphosphate = RNA(n+1) + diphosphate. Functionally, promotes RNA polymerase assembly. Latches the N- and C-terminal regions of the beta' subunit thereby facilitating its interaction with the beta and alpha subunits. The chain is DNA-directed RNA polymerase subunit omega from Thermoanaerobacter sp. (strain X514).